The chain runs to 157 residues: Small ribosomal subunit protein uS9 (157 aa).

Belongs to the universal ribosomal protein uS9 family.

The chain is Small ribosomal subunit protein uS9 from Caulobacter sp. (strain K31).